We begin with the raw amino-acid sequence, 144 residues long: Interleukin-9 (144 aa).

Residues Met1–Gly18 form the signal peptide. Position 19 is a pyrrolidone carboxylic acid (Gln19). N-linked (GlcNAc...) asparagine glycans are attached at residues Asn50, Asn78, Asn101, and Asn114.

Belongs to the IL-7/IL-9 family. As to quaternary structure, interacts with IL9R. Interacts with IL2RG.

Its subcellular location is the secreted. Its function is as follows. Multifunctional cytokine secreted mainly by T-helper 2 lymphocytes and also mast cells or NKT cells that plays important roles in the immune response against parasites. Affects intestinal epithelial permeability and adaptive immunity. In addition, induces the differentiation of specific T-cell subsets such as IL-17 producing helper T-cells (TH17) and also proliferation and differentiation of mast cells. Mechanistically, exerts its biological effects through a receptor composed of IL9R subunit and a signal transducing subunit IL2RG. Receptor stimulation results in the rapid activation of JAK1 and JAK3 kinase activities leading to STAT1, STAT3 and STAT5-mediated transcriptional programs. Induction of differentiation genes seems to be mediated by STAT1 alone, while protection of cells from apoptosis depends on STAT3 and STAT5. The chain is Interleukin-9 (Il9) from Mus musculus (Mouse).